The chain runs to 465 residues: ATP-dependent rRNA helicase rrp3 (465 aa).

A compositionally biased stretch (basic and acidic residues) spans 1-22 (MAPSEKKLTEDKKNSSLNKKIE). The interval 1–44 (MAPSEKKLTEDKKNSSLNKKIETSNSSSEKSSENNNGDSQNNEA) is disordered. Over residues 23 to 36 (TSNSSSEKSSENNN) the composition is skewed to low complexity. The Q motif motif lies at 46–74 (KTFKELGVIDELCEACEKLGFKTPTPIQQ). In terms of domain architecture, Helicase ATP-binding spans 77–248 (IPVVLNKRDV…RASLHQPVRV (172 aa)). Residue 90-97 (AQTGSGKT) participates in ATP binding. The DEAD box signature appears at 196–199 (DEAD). Positions 275-419 (YLVYLVNELA…EYEIDKEGVF (145 aa)) constitute a Helicase C-terminal domain. The span at 442-453 (RRKSKGKLHTKR) shows a compositional bias: basic residues. The tract at residues 442-465 (RRKSKGKLHTKRKRDDLDREEQIY) is disordered. Residues 454 to 465 (KRDDLDREEQIY) show a composition bias toward basic and acidic residues.

The protein belongs to the DEAD box helicase family. DDX47/RRP3 subfamily. In terms of assembly, interacts with the SSU processome.

The protein resides in the nucleus. It catalyses the reaction ATP + H2O = ADP + phosphate + H(+). ATP-dependent rRNA helicase required for pre-ribosomal RNA processing. Involved in the maturation of the 35S-pre-rRNA and to its cleavage to mature 18S rRNA. In Schizosaccharomyces pombe (strain 972 / ATCC 24843) (Fission yeast), this protein is ATP-dependent rRNA helicase rrp3.